A 558-amino-acid polypeptide reads, in one-letter code: Formate--tetrahydrofolate ligase (558 aa).

ATP is bound at residue 66–73; that stretch reads TPAGEGKT.

This sequence belongs to the formate--tetrahydrofolate ligase family.

It carries out the reaction (6S)-5,6,7,8-tetrahydrofolate + formate + ATP = (6R)-10-formyltetrahydrofolate + ADP + phosphate. Its pathway is one-carbon metabolism; tetrahydrofolate interconversion. The sequence is that of Formate--tetrahydrofolate ligase from Neisseria meningitidis serogroup C / serotype 2a (strain ATCC 700532 / DSM 15464 / FAM18).